A 256-amino-acid chain; its full sequence is Type III pantothenate kinase (256 aa).

Residue 7–14 coordinates ATP; it reads DVGNTRLK. Substrate contacts are provided by residues Y96 and 103–106; that span reads GADR. The Proton acceptor role is filled by D105. T133 is a binding site for ATP. T183 is a binding site for substrate.

Belongs to the type III pantothenate kinase family. As to quaternary structure, homodimer. Requires NH4(+) as cofactor. The cofactor is K(+).

The protein localises to the cytoplasm. It carries out the reaction (R)-pantothenate + ATP = (R)-4'-phosphopantothenate + ADP + H(+). Its pathway is cofactor biosynthesis; coenzyme A biosynthesis; CoA from (R)-pantothenate: step 1/5. Catalyzes the phosphorylation of pantothenate (Pan), the first step in CoA biosynthesis. This chain is Type III pantothenate kinase, found in Verminephrobacter eiseniae (strain EF01-2).